A 157-amino-acid chain; its full sequence is Phosphopantetheine adenylyltransferase (157 aa).

Thr-8 lines the substrate pocket. Residues 8–9 and His-16 contribute to the ATP site; that span reads TF. Residues Lys-40, Thr-72, and Arg-86 each contribute to the substrate site. ATP-binding positions include 87 to 89, Glu-97, and 122 to 128; these read GLR and YSFLSSS.

This sequence belongs to the bacterial CoaD family. In terms of assembly, homohexamer. It depends on Mg(2+) as a cofactor.

It localises to the cytoplasm. The catalysed reaction is (R)-4'-phosphopantetheine + ATP + H(+) = 3'-dephospho-CoA + diphosphate. The protein operates within cofactor biosynthesis; coenzyme A biosynthesis; CoA from (R)-pantothenate: step 4/5. Reversibly transfers an adenylyl group from ATP to 4'-phosphopantetheine, yielding dephospho-CoA (dPCoA) and pyrophosphate. The protein is Phosphopantetheine adenylyltransferase of Prochlorococcus marinus (strain AS9601).